Here is a 111-residue protein sequence, read N- to C-terminus: Probable 4-amino-4-deoxy-L-arabinose-phosphoundecaprenol flippase subunit ArnE (111 aa).

The next 3 membrane-spanning stretches (helical) occupy residues 38–58 (LWLG…LLVL), 61–81 (LPVG…TLAA), and 91–111 (PRHW…GSAA). Residues 40–109 (LGLALICMGA…IISGIIILGS (70 aa)) enclose the EamA domain.

This sequence belongs to the ArnE family. Heterodimer of ArnE and ArnF.

The protein localises to the cell inner membrane. Its pathway is bacterial outer membrane biogenesis; lipopolysaccharide biosynthesis. In terms of biological role, translocates 4-amino-4-deoxy-L-arabinose-phosphoundecaprenol (alpha-L-Ara4N-phosphoundecaprenol) from the cytoplasmic to the periplasmic side of the inner membrane. The sequence is that of Probable 4-amino-4-deoxy-L-arabinose-phosphoundecaprenol flippase subunit ArnE from Salmonella paratyphi B (strain ATCC BAA-1250 / SPB7).